A 240-amino-acid chain; its full sequence is Protein unc-119 homolog A (240 aa).

Residues 1-12 (MKVKKGGGGTGS) are compositionally biased toward gly residues. Residues 1–62 (MKVKKGGGGT…PLQGKQPIGP (62 aa)) are disordered. 3 positions are modified to phosphoserine; by CK2: Ser37, Ser39, and Ser41. Tyr131 is a binding site for tetradecanoate.

The protein belongs to the PDE6D/unc-119 family. In terms of assembly, may interact with GTP-bound ARL1. Interacts with ARL2 and ARL3 (GTP-bound forms); this promotes the release of myristoylated cargo proteins. Found in a complex with ARL3, RP2 and UNC119; RP2 induces hydrolysis of GTP ARL3 in the complex, leading to the release of UNC119. Interacts with NPHP3 (when myristoylated). Interacts with CYS1 (when myristoylated). Interacts with MACIR; interaction only takes place when UNC119 is not liganded with myristoylated proteins. Interacts with CABP4; in the absence of calcium. Interacts with DNM1; leading to a decrease of DNM1 GTPase activity. Interacts with LCK; this interaction plays a crucial role in activation of LCK. Interacts with FYN. Interacts with RAB11A; in a cell cycle-dependent manner. Interacts with LYN (via SH2 and SH3 domains); leading to LYN activation. Found in a complex with ABL1, ABL2, CRK and UNC119; leading to the inhibition of CRK phosphorylation by ABL kinases. Interacts with CD44. Interacts with KLHL18 (via kelch repeats). Interacts with PPP3CA, PPP3CB and PPP3CC. Interacts with USP48; this interaction promotes UNC119 stability. Phosphorylation suppresses its interaction with KLHL18 and down-regulates its KLHL18-mediated degradation. Phosphorylated more under light conditions than dark conditions. Dephosphorylated by calcineurin. Localized in photoreceptor synapses in the outer plexiform layer of the retina.

It is found in the cytoplasm. The protein localises to the cytoskeleton. Its subcellular location is the microtubule organizing center. It localises to the centrosome. The protein resides in the spindle. It is found in the spindle pole. Functionally, involved in synaptic functions in photoreceptor cells, the signal transduction in immune cells as a Src family kinase activator, endosome recycling, the uptake of bacteria and endocytosis, protein trafficking in sensory neurons and as lipid-binding chaperone with specificity for a diverse subset of myristoylated proteins. Specifically binds the myristoyl moiety of a subset of N-terminally myristoylated proteins and is required for their localization. Binds myristoylated GNAT1 and is required for G-protein localization and trafficking in sensory neurons. Probably plays a role in trafficking proteins in photoreceptor cells. Plays important roles in mediating Src family kinase signals for the completion of cytokinesis via RAB11A. The chain is Protein unc-119 homolog A (Unc119) from Mus musculus (Mouse).